A 426-amino-acid polypeptide reads, in one-letter code: MHDIRQIRDNPEAFDAALARRGHEPVAAEILALDEQCRAVTTKMQEAQSRRNEASKAIGQAMGQGNTEKAEALKAEVADLKQTLPRLEDEDRELKMRLENALAVIPNLPLDDVPDGADESDNIEVGTWGTKREFSFEPREHADIGPALGMDFETGARLSGARFTFLRGGMARLHRALGQFMLDRQVSEYGYAECAPPVLVRDEAMYGTDKLPKFAEDSFQTTDGRWLIPTAEVSLTASVMDQILDDAALPMRLTALTPCFRSEAGAAGKDTRGFIRQHQFEKCELVSIVRPENSAAEHERMTEAAESVLQALDLPYRKMLLCTGDMGFGARKTYDLEVWLPGQGAYREISSCSNTGDFQARRMNARYRPEGEKKTAFVHTLNGSGLAVGRTLVAVIENYQEEDGSVAVPEVLAPYMGGAMKLEPTP.

An L-serine-binding site is contributed by 230–232 (TAE). 261–263 (RSE) contributes to the ATP binding site. An L-serine-binding site is contributed by Glu-284. An ATP-binding site is contributed by 348–351 (EISS). Ser-384 is a binding site for L-serine.

Belongs to the class-II aminoacyl-tRNA synthetase family. Type-1 seryl-tRNA synthetase subfamily. As to quaternary structure, homodimer. The tRNA molecule binds across the dimer.

The protein resides in the cytoplasm. The catalysed reaction is tRNA(Ser) + L-serine + ATP = L-seryl-tRNA(Ser) + AMP + diphosphate + H(+). The enzyme catalyses tRNA(Sec) + L-serine + ATP = L-seryl-tRNA(Sec) + AMP + diphosphate + H(+). The protein operates within aminoacyl-tRNA biosynthesis; selenocysteinyl-tRNA(Sec) biosynthesis; L-seryl-tRNA(Sec) from L-serine and tRNA(Sec): step 1/1. Catalyzes the attachment of serine to tRNA(Ser). Is also able to aminoacylate tRNA(Sec) with serine, to form the misacylated tRNA L-seryl-tRNA(Sec), which will be further converted into selenocysteinyl-tRNA(Sec). This is Serine--tRNA ligase from Erythrobacter litoralis (strain HTCC2594).